Consider the following 1955-residue polypeptide: Protocadherin-15 (1955 aa).

An N-terminal signal peptide occupies residues 1-26 (MFRQFYLWTCLASGIILGSLFEICLG). Residues 27–1376 (QYDDDCKLAR…GESLGYTEGA (1350 aa)) are Extracellular-facing. A disulfide bridge links C32 with C120. Cadherin domains follow at residues 40-147 (PATI…SPTF), 148-265 (KHES…GPMF), 278-395 (RPLT…SPYF), 396-509 (TMPS…TPTF), 510-616 (PEIS…PPRF), 617-717 (PQLM…APVF), 719-819 (PYLP…SPVF), 820-926 (TNST…PPVF), 927-1035 (SKRI…IPRF), 1037-1144 (QEEY…PPVF), and 1145-1259 (QKKF…PPTL). N-linked (GlcNAc...) asparagine glycosylation is found at N52, N97, and N201. N-linked (GlcNAc...) asparagine glycosylation is found at N419, N559, N662, N724, N768, N821, and N851. Residues N1064, N1084, and N1175 are each glycosylated (N-linked (GlcNAc...) asparagine). The chain crosses the membrane as a helical span at residues 1377 to 1397 (LLALAFIIILCCIPAILVVLV). Residues 1398–1955 (SYRQFKVRQA…KQSHSQSTSL (558 aa)) are Cytoplasmic-facing. The span at 1426–1444 (VPAPAPVAAPPPPPPPPPG) shows a compositional bias: pro residues. 4 disordered regions span residues 1426 to 1446 (VPAP…PGAH), 1601 to 1623 (QGTR…GSSN), 1745 to 1766 (CPLP…APLA), and 1928 to 1955 (ITSE…STSL). Positions 1928-1941 (ITSEQNKGSLNNIV) are enriched in polar residues.

In terms of assembly, antiparallel heterodimer with CDH23. Found in a complex with TMIE and LHFPL5. Interacts with LHFPL5/TMHS; this interaction is required for efficient localization to hair bundles. Interacts with MYO7A. Interacts with USH1G; this interaction may recruit USH1G to the plasma membrane. Interacts with TOMT. Isoforms CD1 and CD3 interact with TMC1 (via N-terminus) and TMC2 (via N-terminus). In terms of tissue distribution, expressed in brain, lung, kidney, spleen and testis. Found also in the inner and outer synaptic layers, and the nerve fiber layer in adult and fetal retinas. Found in the supporting cells, outer sulcus cells and spiral ganglion of fetal cochlea. Expressed in cytotoxic tumor-derived T- and NK-cell lines as well as biopsies of nasal NK/T-cell lymphomas. Not detected in normal or in vitro activated peripheral blood cells, CD4 or CD8 lymphocytes or NK cells. Isoform 3 is expressed in brain, heart, cerebellum and kidney. CD1 isoforms, such as isoform 1, have a limited pattern of expression and is detected in testis, retina and cochlea. CD2 isoforms, such as isoforms 4 and 5, are expressed in heart, kidney, thymus, spleen, testis, retina and cochlea. CD3 isoforms, such as isoform 6, are widely expressed.

It is found in the cell membrane. The protein localises to the secreted. In terms of biological role, calcium-dependent cell-adhesion protein. Essential for maintenance of normal retinal and cochlear function. The protein is Protocadherin-15 (PCDH15) of Homo sapiens (Human).